The sequence spans 131 residues: Squamosa promoter-binding-like protein 3 (131 aa).

The span at 1–17 shows a compositional bias: basic and acidic residues; that stretch reads MSMRRSKAEGKRSLREL. Positions 1–54 are disordered; it reads MSMRRSKAEGKRSLRELSEEEEEEEETEDEDTFEEEEALEKKQKGKATSSSGVC. The span at 18 to 38 shows a compositional bias: acidic residues; that stretch reads SEEEEEEEETEDEDTFEEEEA. Residues 45 to 129 form a sufficient and necessary for DNA binding region; that stretch reads GKATSSSGVC…GHNERRRKST (85 aa). The SBP-type zinc finger occupies 51–128; that stretch reads SGVCQVESCT…AGHNERRRKS (78 aa). Residues cysteine 54, cysteine 59, cysteine 76, histidine 79, cysteine 95, cysteine 98, histidine 102, and cysteine 114 each contribute to the Zn(2+) site. A Bipartite nuclear localization signal motif is present at residues 111 to 127; that stretch reads KRSCRRRLAGHNERRRK.

The cofactor is Zn(2+). Expressed in vegetative and inflorescence apical meristems, floral meristems, leaf and flower organ primordia, inflorescence stem tissue and to lower extent in roots.

It localises to the nucleus. Its subcellular location is the cytoplasm. Trans-acting factor that binds specifically to the consensus nucleotide sequence 5'-TNCGTACAA-3' of AP1 promoter. Binds specifically to the 5'-GTAC-3' core sequence. Promotes both vegetative phase change and flowering. Regulates phase-specific patterns of leaf epidermal differentiation and flowering time, but does not seem to affect leaf shape. This Arabidopsis thaliana (Mouse-ear cress) protein is Squamosa promoter-binding-like protein 3 (SPL3).